The chain runs to 346 residues: Probable dual-specificity RNA methyltransferase RlmN (346 aa).

The active-site Proton acceptor is Glu-90. The Radical SAM core domain maps to 96-330 (TRDRLTVCVS…VSVRASRGLD (235 aa)). An intrachain disulfide couples Cys-103 to Cys-335. The [4Fe-4S] cluster site is built by Cys-110, Cys-114, and Cys-117. S-adenosyl-L-methionine-binding positions include 157–158 (GE), Ser-187, 216–218 (SLH), and Asn-292. The active-site S-methylcysteine intermediate is the Cys-335.

This sequence belongs to the radical SAM superfamily. RlmN family. Requires [4Fe-4S] cluster as cofactor.

It is found in the cytoplasm. The enzyme catalyses adenosine(2503) in 23S rRNA + 2 reduced [2Fe-2S]-[ferredoxin] + 2 S-adenosyl-L-methionine = 2-methyladenosine(2503) in 23S rRNA + 5'-deoxyadenosine + L-methionine + 2 oxidized [2Fe-2S]-[ferredoxin] + S-adenosyl-L-homocysteine. It catalyses the reaction adenosine(37) in tRNA + 2 reduced [2Fe-2S]-[ferredoxin] + 2 S-adenosyl-L-methionine = 2-methyladenosine(37) in tRNA + 5'-deoxyadenosine + L-methionine + 2 oxidized [2Fe-2S]-[ferredoxin] + S-adenosyl-L-homocysteine. Its function is as follows. Specifically methylates position 2 of adenine 2503 in 23S rRNA and position 2 of adenine 37 in tRNAs. The protein is Probable dual-specificity RNA methyltransferase RlmN of Synechococcus sp. (strain RCC307).